A 445-amino-acid chain; its full sequence is Putative transcription factor bHLH056 (445 aa).

Disordered regions lie at residues Asn-36–Leu-70, Gln-224–His-260, and Pro-365–Ala-445. The segment covering Ser-231–Arg-246 has biased composition (basic and acidic residues). The region spanning Arg-255 to Leu-304 is the bHLH domain. The span at Gln-418–Ser-433 shows a compositional bias: low complexity.

In terms of assembly, homodimer.

Its subcellular location is the nucleus. This is Putative transcription factor bHLH056 (BHLH56) from Arabidopsis thaliana (Mouse-ear cress).